Here is a 493-residue protein sequence, read N- to C-terminus: Guanosine-5'-triphosphate,3'-diphosphate pyrophosphatase (493 aa).

The protein belongs to the GppA/Ppx family. GppA subfamily.

It carries out the reaction guanosine 3'-diphosphate 5'-triphosphate + H2O = guanosine 3',5'-bis(diphosphate) + phosphate + H(+). It participates in purine metabolism; ppGpp biosynthesis; ppGpp from GTP: step 2/2. In terms of biological role, catalyzes the conversion of pppGpp to ppGpp. Guanosine pentaphosphate (pppGpp) is a cytoplasmic signaling molecule which together with ppGpp controls the 'stringent response', an adaptive process that allows bacteria to respond to amino acid starvation, resulting in the coordinated regulation of numerous cellular activities. The polypeptide is Guanosine-5'-triphosphate,3'-diphosphate pyrophosphatase (Salmonella agona (strain SL483)).